Consider the following 122-residue polypeptide: Large ribosomal subunit protein uL14 (122 aa).

The protein belongs to the universal ribosomal protein uL14 family. Part of the 50S ribosomal subunit. Forms a cluster with proteins L3 and L19. In the 70S ribosome, L14 and L19 interact and together make contacts with the 16S rRNA in bridges B5 and B8.

Functionally, binds to 23S rRNA. Forms part of two intersubunit bridges in the 70S ribosome. The protein is Large ribosomal subunit protein uL14 of Endomicrobium trichonymphae.